Consider the following 347-residue polypeptide: MGCILTIEAKKSRDIDYQLRKEEGSKNETKLLLLGPGESGKSTIFKQMKIIQDDGGFSIDERLEYRYIIYGNCISQMKVLVTAAISQDLKPNNPDNETRFEKFSKISPGGNSWTLEIAEDIKQLWSDDSIQNIYRMKDKFYQLNDSAAYFFDNIGRFANENYVPTQDDVLRSRVRTTGIQEAHFKFINIEFRMLDVGGQRSERRKWIHCFDSVTAVIFCVALSEYDQTLREEESQNRMKESLMLFDEIVNSHWFRNTAFIIFFNKVDLFREKIAKIDLGDYFPAYTGGLSFDNSTQFIKKMFLDLSTGNQRIFAHFTCAIDTANIQFVFHAVRETLLKNIFNTIINY.

Gly2 carries the N-myristoyl glycine lipid modification. Cys3 carries S-palmitoyl cysteine lipidation. The region spanning 27–347 (NETKLLLLGP…KNIFNTIINY (321 aa)) is the G-alpha domain. Residues 30 to 43 (KLLLLGPGESGKST) are G1 motif. Residues 35–42 (GPGESGKS), 170–176 (LRSRVRT), 195–199 (DVGGQ), 264–267 (NKVD), and Ala319 each bind GTP. 2 residues coordinate Mg(2+): Ser42 and Thr176. Positions 168–176 (DVLRSRVRT) are G2 motif. A G3 motif region spans residues 191–200 (FRMLDVGGQR). Residues 260 to 267 (IIFFNKVD) are G4 motif. Residues 317–322 (TCAIDT) are G5 motif.

It belongs to the G-alpha family. G(q) subfamily. As to quaternary structure, g proteins are composed of 3 units; alpha, beta and gamma. The alpha chain contains the guanine nucleotide binding site.

Guanine nucleotide-binding proteins (G proteins) are involved as modulators or transducers in various transmembrane signaling systems. This Dictyostelium discoideum (Social amoeba) protein is Guanine nucleotide-binding protein alpha-5 subunit (gpaE).